A 424-amino-acid chain; its full sequence is MFIDTAKIFVKSGKGGDGSISFRREKYIAFGGPDGGDGGKGGNVVLVVDPNMTTLLDFTYKRKYKAEPGGNGAGSKCFGKNGKDLHIKVPMGTIVKDAETDKIMADLSKPEDSYVVAKGGRGGKGNCRFTTPTRQAPDFAEPGMPEEERWIKLELKLLADVGLIGFPNVGKSTLLSVVSKARPKIANYHFTTLKPNLGVVSIEGVNNFVIADIPGIIEGASEGVGLGLDFLRHVERTRVLIHVIDISSVEGRDPYDDFLKINDELKRYSVKLYDRPQIIAANKSDMLFDEEKFEEFKTKVEKHGYNKVFKISAATKQGVDDLMKEAARLLSTIPVTDLEISEEDRFIEEEKRFTYSIRKEDNTYIVEGSFVDRLLNAVNVNDPDDLRYFHKVLKNKGVMEELMEMGIEDGDVVRLNDFEFDFLL.

In terms of domain architecture, Obg spans 1–158 (MFIDTAKIFV…RWIKLELKLL (158 aa)). The region spanning 159–331 (ADVGLIGFPN…LMKEAARLLS (173 aa)) is the OBG-type G domain. GTP is bound by residues 165 to 172 (GFPNVGKS), 190 to 194 (FTTLK), 212 to 215 (DIPG), 282 to 285 (NKSD), and 312 to 314 (SAA). Ser-172 and Thr-192 together coordinate Mg(2+). An OCT domain is found at 345–424 (RFIEEEKRFT…LNDFEFDFLL (80 aa)).

The protein belongs to the TRAFAC class OBG-HflX-like GTPase superfamily. OBG GTPase family. As to quaternary structure, monomer. Requires Mg(2+) as cofactor.

It localises to the cytoplasm. Functionally, an essential GTPase which binds GTP, GDP and possibly (p)ppGpp with moderate affinity, with high nucleotide exchange rates and a fairly low GTP hydrolysis rate. Plays a role in control of the cell cycle, stress response, ribosome biogenesis and in those bacteria that undergo differentiation, in morphogenesis control. In Clostridium botulinum (strain Langeland / NCTC 10281 / Type F), this protein is GTPase Obg.